Reading from the N-terminus, the 71-residue chain is Small ribosomal subunit protein bS21 (71 aa).

This sequence belongs to the bacterial ribosomal protein bS21 family.

This Acinetobacter baylyi (strain ATCC 33305 / BD413 / ADP1) protein is Small ribosomal subunit protein bS21.